We begin with the raw amino-acid sequence, 82 residues long: Myrmicitoxin(1)-Pm3a (82 aa).

Residues methionine 1–alanine 23 form the signal peptide. A propeptide spanning residues threonine 24–proline 59 is cleaved from the precursor. Leucine 81 bears the Leucine amide mark.

It belongs to the formicidae venom clade 1 family. Expressed by the venom gland.

It is found in the secreted. In terms of biological role, toxin that causes a slowly developing temporary paralysis when intrathoracically injected into insects (blowflies). Does not cause spontaneous nocifensive behaviors by intraplantar injection in mice. The polypeptide is Myrmicitoxin(1)-Pm3a (Pogonomyrmex maricopa (Maricopa harvester ant)).